Consider the following 230-residue polypeptide: Alpha-S1-casein (230 aa).

An N-terminal signal peptide occupies residues 1–15 (MKLLILTCLVAVALA). A phosphoserine mark is found at Ser-33, Ser-83, Ser-85, Ser-86, Ser-87, and Ser-88. The span at 60-83 (DELKDTRNEPTEDHIMEDTERKES) shows a compositional bias: basic and acidic residues. 2 disordered regions span residues 60-103 (DELK…DILK) and 211-230 (TPEGIASEDGGKTDVMPQWW). A compositionally biased stretch (low complexity) spans 84-96 (GSSSSEEVVSSTT).

Belongs to the alpha-casein family. As to expression, mammary gland specific. Secreted in milk.

Its subcellular location is the secreted. Functionally, important role in the capacity of milk to transport calcium phosphate. The polypeptide is Alpha-S1-casein (CSN1S1) (Camelus dromedarius (Dromedary)).